Here is a 195-residue protein sequence, read N- to C-terminus: Imidazoleglycerol-phosphate dehydratase (195 aa).

Belongs to the imidazoleglycerol-phosphate dehydratase family.

The protein localises to the cytoplasm. The enzyme catalyses D-erythro-1-(imidazol-4-yl)glycerol 3-phosphate = 3-(imidazol-4-yl)-2-oxopropyl phosphate + H2O. It participates in amino-acid biosynthesis; L-histidine biosynthesis; L-histidine from 5-phospho-alpha-D-ribose 1-diphosphate: step 6/9. The polypeptide is Imidazoleglycerol-phosphate dehydratase (Paraburkholderia phymatum (strain DSM 17167 / CIP 108236 / LMG 21445 / STM815) (Burkholderia phymatum)).